The following is a 412-amino-acid chain: Divalent metal cation transporter MntH (412 aa).

The Cytoplasmic segment spans residues 1–19 (MTNYRVESSSGRAARKTRL). The chain crosses the membrane as a helical span at residues 20–39 (ALMGPAFIAAIGYIDPGNFA). The Periplasmic segment spans residues 40 to 51 (TNIQAGASFGYQ). Residues 52-71 (LLWVVVWANLMAMLIQILSA) traverse the membrane as a helical segment. At 72 to 95 (KLGIATGKNLAEQIRDHYPRPVVW) the chain is on the cytoplasmic side. The chain crosses the membrane as a helical span at residues 96–118 (FYWVQAEIIAMATDLAEFIGAAI). Over 119-125 (GFKLILG) the chain is Periplasmic. The chain crosses the membrane as a helical span at residues 126-145 (VSLLQGAVLTGIATFLILML). Over 146–155 (QRRGQKPLEK) the chain is Cytoplasmic. The chain crosses the membrane as a helical span at residues 156–175 (VIGGLLLFVAAAYIVELIFS). At 176-196 (QPNLAQLGKGMVIPSLPTSEA) the chain is on the periplasmic side. Residues 197–220 (VFLAAGVLGATIMPHVIYLHSSLT) traverse the membrane as a helical segment. Over 221 to 238 (QHLHGGSRQQRYSATKWD) the chain is Cytoplasmic. The chain crosses the membrane as a helical span at residues 239–258 (VAIAMTIAGFVNLAMMATAA). Residues 259–276 (AAFHFSGHTGVADLDEAY) lie on the Periplasmic side of the membrane. Residues 277–297 (LTLQPLLSHAAATVFGLSLVA) traverse the membrane as a helical segment. Residues 298–327 (AGLSSTVVGTLAGQVVMQGFIRFHIPLWVR) are Cytoplasmic-facing. The chain crosses the membrane as a helical span at residues 328 to 344 (RTVTMLPSFIVILMGLD). Residues 345–350 (PTRILV) lie on the Periplasmic side of the membrane. The chain crosses the membrane as a helical span at residues 351 to 370 (MSQVLLSFGIALALVPLLIF). At 371 to 387 (TSDSKLMGDLVNSKRVK) the chain is on the cytoplasmic side. The helical transmembrane segment at 388 to 406 (QTGWVIVVLVVALNIWLLV) threads the bilayer. The Periplasmic segment spans residues 407 to 412 (GTALGL).

The protein belongs to the NRAMP family.

Its subcellular location is the cell inner membrane. Functionally, h(+)-stimulated, divalent metal cation uptake system. The sequence is that of Divalent metal cation transporter MntH from Escherichia coli O9:H4 (strain HS).